A 68-amino-acid polypeptide reads, in one-letter code: Large ribosomal subunit protein uL29 (68 aa).

It belongs to the universal ribosomal protein uL29 family.

The protein is Large ribosomal subunit protein uL29 of Streptococcus agalactiae serotype Ia (strain ATCC 27591 / A909 / CDC SS700).